A 371-amino-acid polypeptide reads, in one-letter code: Protein disulfide isomerase-like 2-2 (371 aa).

Positions 1–27 are cleaved as a signal peptide; that stretch reads MAIPRISPRKTLPLFAALALALAWAFA. Thioredoxin domains lie at 28–143 and 147–262; these read APAF…TEGG and KLAT…EKCG. Residues Cys-64, Cys-67, Cys-183, and Cys-186 each act as nucleophile in the active site. Disulfide bonds link Cys-64–Cys-67 and Cys-183–Cys-186.

Belongs to the protein disulfide isomerase family.

The protein localises to the secreted. It catalyses the reaction Catalyzes the rearrangement of -S-S- bonds in proteins.. In terms of biological role, acts as a protein-folding catalyst that interacts with nascent polypeptides to catalyze the formation, isomerization, and reduction or oxidation of disulfide bonds. May play a role in storage protein biogenesis. This chain is Protein disulfide isomerase-like 2-2 (PDIL2-2), found in Oryza sativa subsp. japonica (Rice).